The primary structure comprises 185 residues: Ribosome-recycling factor (185 aa).

This sequence belongs to the RRF family.

It localises to the cytoplasm. Its function is as follows. Responsible for the release of ribosomes from messenger RNA at the termination of protein biosynthesis. May increase the efficiency of translation by recycling ribosomes from one round of translation to another. This Macrococcus caseolyticus (strain JCSC5402) (Macrococcoides caseolyticum) protein is Ribosome-recycling factor.